An 85-amino-acid chain; its full sequence is ATP synthase subunit c (85 aa).

2 consecutive transmembrane segments (helical) span residues isoleucine 10–leucine 30 and phenylalanine 53–phenylalanine 73.

Belongs to the ATPase C chain family. F-type ATPases have 2 components, F(1) - the catalytic core - and F(0) - the membrane proton channel. F(1) has five subunits: alpha(3), beta(3), gamma(1), delta(1), epsilon(1). F(0) has three main subunits: a(1), b(2) and c(10-14). The alpha and beta chains form an alternating ring which encloses part of the gamma chain. F(1) is attached to F(0) by a central stalk formed by the gamma and epsilon chains, while a peripheral stalk is formed by the delta and b chains.

The protein resides in the cell inner membrane. Its function is as follows. F(1)F(0) ATP synthase produces ATP from ADP in the presence of a proton or sodium gradient. F-type ATPases consist of two structural domains, F(1) containing the extramembraneous catalytic core and F(0) containing the membrane proton channel, linked together by a central stalk and a peripheral stalk. During catalysis, ATP synthesis in the catalytic domain of F(1) is coupled via a rotary mechanism of the central stalk subunits to proton translocation. Key component of the F(0) channel; it plays a direct role in translocation across the membrane. A homomeric c-ring of between 10-14 subunits forms the central stalk rotor element with the F(1) delta and epsilon subunits. This chain is ATP synthase subunit c, found in Aliivibrio salmonicida (strain LFI1238) (Vibrio salmonicida (strain LFI1238)).